A 39-amino-acid polypeptide reads, in one-letter code: Photosystem II reaction center protein J (39 aa).

The helical transmembrane segment at 7-27 (IPLWIVAVVAGMGVIAVVGIF) threads the bilayer.

This sequence belongs to the PsbJ family. As to quaternary structure, PSII is composed of 1 copy each of membrane proteins PsbA, PsbB, PsbC, PsbD, PsbE, PsbF, PsbH, PsbI, PsbJ, PsbK, PsbL, PsbM, PsbT, PsbX, PsbY, PsbZ, Psb30/Ycf12, peripheral proteins PsbO, CyanoQ (PsbQ), PsbU, PsbV and a large number of cofactors. It forms dimeric complexes.

The protein resides in the cellular thylakoid membrane. In terms of biological role, this protein is a component of the reaction center of photosystem II. One of the components of the core complex of photosystem II (PSII). PSII is a light-driven water:plastoquinone oxidoreductase that uses light energy to abstract electrons from H(2)O, generating O(2) and a proton gradient subsequently used for ATP formation. It consists of a core antenna complex that captures photons, and an electron transfer chain that converts photonic excitation into a charge separation. The chain is Photosystem II reaction center protein J from Picosynechococcus sp. (strain ATCC 27264 / PCC 7002 / PR-6) (Agmenellum quadruplicatum).